A 345-amino-acid polypeptide reads, in one-letter code: Heat-inducible transcription repressor HrcA (345 aa).

It belongs to the HrcA family.

Its function is as follows. Negative regulator of class I heat shock genes (grpE-dnaK-dnaJ and groELS operons). Prevents heat-shock induction of these operons. The protein is Heat-inducible transcription repressor HrcA of Listeria welshimeri serovar 6b (strain ATCC 35897 / DSM 20650 / CCUG 15529 / CIP 8149 / NCTC 11857 / SLCC 5334 / V8).